The chain runs to 877 residues: Probable alpha/beta-glucosidase agdC (877 aa).

The signal sequence occupies residues 1–14 (MLGSLLLLAPLAGA). 3 N-linked (GlcNAc...) asparagine glycosylation sites follow: asparagine 171, asparagine 293, and asparagine 373. Residue aspartate 422 is the Nucleophile of the active site. Glutamate 425 is an active-site residue. The segment at 432 to 476 (DPCTDPERYSSENNLPPAPPPVRSSSPRPLPGFPADFQPSSASRS) is disordered. Pro residues predominate over residues 447–463 (PPAPPPVRSSSPRPLPG). An N-linked (GlcNAc...) asparagine glycan is attached at asparagine 508. Aspartate 573 serves as the catalytic Proton donor. N-linked (GlcNAc...) asparagine glycosylation is found at asparagine 574, asparagine 610, and asparagine 744.

The protein belongs to the glycosyl hydrolase 31 family.

The protein resides in the secreted. It carries out the reaction Hydrolysis of terminal, non-reducing (1-&gt;4)-linked alpha-D-glucose residues with release of alpha-D-glucose.. The catalysed reaction is Hydrolysis of terminal, non-reducing beta-D-glucosyl residues with release of beta-D-glucose.. Functionally, glucosidase involved in the degradation of cellulosic biomass. Has both alpha- and beta-glucosidase activity. The polypeptide is Probable alpha/beta-glucosidase agdC (agdC) (Aspergillus flavus (strain ATCC 200026 / FGSC A1120 / IAM 13836 / NRRL 3357 / JCM 12722 / SRRC 167)).